The chain runs to 593 residues: Cysteine/serine-rich nuclear protein 1 (593 aa).

Disordered regions lie at residues 1-66 (MTGL…RDFC), 313-392 (FREL…GVDD), and 478-497 (REGSLPGTSVPPSMDAGQSS). Composition is skewed to low complexity over residues 17–46 (SSVSSSSSSSSSSSGCQSLSCSPSSSVSRA) and 351–372 (SCSSDMTDSSTASSSASGTSGA).

The protein belongs to the AXUD1 family.

The protein resides in the nucleus. Its function is as follows. Binds to the consensus sequence 5'-AGAGTG-3' and has transcriptional activator activity. May have a tumor-suppressor function. May play a role in apoptosis. The polypeptide is Cysteine/serine-rich nuclear protein 1 (CSRNP1) (Pongo abelii (Sumatran orangutan)).